The following is a 386-amino-acid chain: Chorismate synthase (386 aa).

NADP(+) is bound by residues Arg-45 and Arg-51. FMN contacts are provided by residues 131–133 (RTS), 251–252 (QG), Ser-294, 309–313 (KPIPS), and Arg-335.

The protein belongs to the chorismate synthase family. As to quaternary structure, homotetramer. It depends on FMNH2 as a cofactor.

It catalyses the reaction 5-O-(1-carboxyvinyl)-3-phosphoshikimate = chorismate + phosphate. It functions in the pathway metabolic intermediate biosynthesis; chorismate biosynthesis; chorismate from D-erythrose 4-phosphate and phosphoenolpyruvate: step 7/7. Its function is as follows. Catalyzes the anti-1,4-elimination of the C-3 phosphate and the C-6 proR hydrogen from 5-enolpyruvylshikimate-3-phosphate (EPSP) to yield chorismate, which is the branch point compound that serves as the starting substrate for the three terminal pathways of aromatic amino acid biosynthesis. This reaction introduces a second double bond into the aromatic ring system. In Clostridium tetani (strain Massachusetts / E88), this protein is Chorismate synthase.